A 31-amino-acid chain; its full sequence is GIPCAESCVWIPCTVTALLGCSCKDKVCYLN.

The segment at residues 1-31 is a cross-link (cyclopeptide (Gly-Asn)); that stretch reads GIPCAESCVWIPCTVTALLGCSCKDKVCYLN. Cystine bridges form between Cys-4/Cys-21, Cys-8/Cys-23, and Cys-13/Cys-28.

Post-translationally, contains 3 disulfide bonds. In terms of processing, this is a cyclic peptide. Expressed in root, seed and nodule but not in flower, stem, shoot, leaf and pod.

Functionally, probably participates in a plant defense mechanism. The sequence is that of Cyclotide cter-D from Clitoria ternatea (Butterfly pea).